A 424-amino-acid chain; its full sequence is UPF0229 protein PputGB1_0427 (424 aa).

The segment at 81-107 (EFTAGEHIPRPQGGGGGGGGRGKAGNS) is disordered. Over residues 92 to 107 (QGGGGGGGGRGKAGNS) the composition is skewed to gly residues.

This sequence belongs to the UPF0229 family.

The sequence is that of UPF0229 protein PputGB1_0427 from Pseudomonas putida (strain GB-1).